A 1005-amino-acid chain; its full sequence is Probable beta-galactosidase A (1005 aa).

The signal sequence occupies residues 1-18 (MKLLSVAAVALLAAQAAG). Positions 96, 140, 141, and 142 each coordinate substrate. A glycan (N-linked (GlcNAc...) asparagine) is linked at N156. N199 serves as a coordination point for substrate. Catalysis depends on E200, which acts as the Proton donor. C205 and C206 are oxidised to a cystine. Y260 is a binding site for substrate. Residues C266 and C315 are joined by a disulfide bond. E298 acts as the Nucleophile in catalysis. Residue Y364 coordinates substrate. 10 N-linked (GlcNAc...) asparagine glycosylation sites follow: N373, N402, N453, N478, N522, N622, N760, N777, N805, and N914.

It belongs to the glycosyl hydrolase 35 family.

The protein localises to the secreted. The catalysed reaction is Hydrolysis of terminal non-reducing beta-D-galactose residues in beta-D-galactosides.. Functionally, cleaves beta-linked terminal galactosyl residues from gangliosides, glycoproteins, and glycosaminoglycans. This is Probable beta-galactosidase A (lacA) from Aspergillus flavus (strain ATCC 200026 / FGSC A1120 / IAM 13836 / NRRL 3357 / JCM 12722 / SRRC 167).